A 608-amino-acid chain; its full sequence is Glutamine--fructose-6-phosphate aminotransferase [isomerizing] (608 aa).

The active-site Nucleophile; for GATase activity is C2. The Glutamine amidotransferase type-2 domain maps to 2 to 217; it reads CGIVGYSGKK…DKEFVVLTSE (216 aa). SIS domains are found at residues 285–424 and 453–598; these read TKEQ…NKNT and KVQK…VDKP. The active-site For Fru-6P isomerization activity is K603.

As to quaternary structure, homodimer.

The protein resides in the cytoplasm. The enzyme catalyses D-fructose 6-phosphate + L-glutamine = D-glucosamine 6-phosphate + L-glutamate. In terms of biological role, catalyzes the first step in hexosamine metabolism, converting fructose-6P into glucosamine-6P using glutamine as a nitrogen source. This is Glutamine--fructose-6-phosphate aminotransferase [isomerizing] from Clostridium acetobutylicum (strain ATCC 824 / DSM 792 / JCM 1419 / IAM 19013 / LMG 5710 / NBRC 13948 / NRRL B-527 / VKM B-1787 / 2291 / W).